A 104-amino-acid chain; its full sequence is Large ribosomal subunit protein uL24 (104 aa).

Positions 82 to 92 (RIGYRTDENGK) are enriched in basic and acidic residues. Residues 82–104 (RIGYRTDENGKRVRISRRNGKDI) form a disordered region. The segment covering 93-104 (RVRISRRNGKDI) has biased composition (basic residues).

It belongs to the universal ribosomal protein uL24 family. Part of the 50S ribosomal subunit.

One of two assembly initiator proteins, it binds directly to the 5'-end of the 23S rRNA, where it nucleates assembly of the 50S subunit. In terms of biological role, one of the proteins that surrounds the polypeptide exit tunnel on the outside of the subunit. This Nocardia farcinica (strain IFM 10152) protein is Large ribosomal subunit protein uL24.